Consider the following 115-residue polypeptide: NADH-ubiquinone oxidoreductase chain 3 (115 aa).

Transmembrane regions (helical) follow at residues Phe-4–Leu-24, Phe-55–Leu-75, and Thr-87–Leu-107.

The protein belongs to the complex I subunit 3 family. Core subunit of respiratory chain NADH dehydrogenase (Complex I) which is composed of 45 different subunits. Interacts with TMEM186. Interacts with TMEM242.

It localises to the mitochondrion inner membrane. The catalysed reaction is a ubiquinone + NADH + 5 H(+)(in) = a ubiquinol + NAD(+) + 4 H(+)(out). Core subunit of the mitochondrial membrane respiratory chain NADH dehydrogenase (Complex I) which catalyzes electron transfer from NADH through the respiratory chain, using ubiquinone as an electron acceptor. Essential for the catalytic activity of complex I. This chain is NADH-ubiquinone oxidoreductase chain 3, found in Reithrodontomys megalotis (Western harvest mouse).